We begin with the raw amino-acid sequence, 234 residues long: Large ribosomal subunit protein uL1 (234 aa).

It belongs to the universal ribosomal protein uL1 family. In terms of assembly, part of the 50S ribosomal subunit.

Binds directly to 23S rRNA. The L1 stalk is quite mobile in the ribosome, and is involved in E site tRNA release. Functionally, protein L1 is also a translational repressor protein, it controls the translation of the L11 operon by binding to its mRNA. In Corynebacterium aurimucosum (strain ATCC 700975 / DSM 44827 / CIP 107346 / CN-1) (Corynebacterium nigricans), this protein is Large ribosomal subunit protein uL1.